The sequence spans 333 residues: ATP synthase subunit a (333 aa).

A signal peptide spans 1-32 (MIYLHNKRKGMLKRLSALIVIGLLMNLPAVFA). The next 7 helical transmembrane spans lie at 100-120 (HVVMMWIAAAILLLIMFGVGN), 161-181 (FMPFLLTIFFFILVCNLIGLV), 185-205 (ATATGNINVTATLAIFTFLVT), 229-249 (LMWIIMVPVEFIGLFTKPFAL), 254-274 (FANMTAGHIVIISLLGLIFVF), 279-299 (IAPVSVAFALFIYLLEILVAF), and 300-320 (LQAYIFTLLSALFIGMAVAHE).

Belongs to the ATPase A chain family. F-type ATPases have 2 components, CF(1) - the catalytic core - and CF(0) - the membrane proton channel. CF(1) has five subunits: alpha(3), beta(3), gamma(1), delta(1), epsilon(1). CF(0) has four main subunits: a, b, b' and c.

The protein resides in the cell inner membrane. Its function is as follows. Key component of the proton channel; it plays a direct role in the translocation of protons across the membrane. The chain is ATP synthase subunit a from Chloroherpeton thalassium (strain ATCC 35110 / GB-78).